The primary structure comprises 139 residues: MDKYKIFDVDRNNGIGARSAIMGLYHHPSMVHRGTFYEKGCPVTPDHDKYCIYFIIYTPEPLIIRTLTAHFVSGARPREWFLGGWCSTPRHIGIGQHSVLANRGVRILSLFLFFEVLAYYPFGFFSWPNSWSNQKWFLI.

The protein localises to the mitochondrion. This is an uncharacterized protein from Marchantia polymorpha (Common liverwort).